Here is a 364-residue protein sequence, read N- to C-terminus: MARTMRSRVVAGAVACAMSIAPFAGTTAVMTLATTHAAMAATAPADGYAATRYPIILVHGLSGTDKYAGVVEYWYGIQEDLQQNGATVYVANLSGFQSDDGANGRGEQLLAYVKTVLAATGATKVNLVGHSQGGLTSRYVAAVAPDLVASVTTIGTPHRGSEFADFVQNVLAYDPTGLSSSVIAAFVNVFGILTSSSHNTNQDALAALQTLTTARAATYNQNYPSAGLGAPGSCQTGAPTETVGGNTHLLYSWAGTAIQPTLSVFGITGATDTSTVPLVDLANVLDPSTLALFGTGTVMINRGSGQNDGLVSKCSALYGKVLSTSYKWNHLDEINQLLGVRGAYAEDPVAVIRTHANRLKLAGV.

The N-terminal stretch at 1–44 (MARTMRSRVVAGAVACAMSIAPFAGTTAVMTLATTHAAMAATAP) is a signal peptide. The region spanning 54 to 333 (PIILVHGLSG…TSYKWNHLDE (280 aa)) is the AB hydrolase-1 domain. L61 lines the substrate pocket. The active-site Nucleophile is S131. Substrate is bound at residue Q132. Residues C234 and C314 are joined by a disulfide bond. D286 contacts Ca(2+). Residues D308 and H330 each act as charge relay system in the active site. Residues D332, Q336, and V340 each contribute to the Ca(2+) site.

The protein belongs to the AB hydrolase superfamily. Pseudomonas lipase family. In terms of assembly, monomer. It depends on Ca(2+) as a cofactor.

The protein localises to the secreted. The catalysed reaction is a triacylglycerol + H2O = a diacylglycerol + a fatty acid + H(+). In terms of biological role, catalyzes the hydrolysis of triacylglycerol. This chain is Triacylglycerol lipase, found in Pseudomonas sp. (strain KWI-56).